The primary structure comprises 245 residues: tRNA pseudouridine synthase A (245 aa).

Catalysis depends on Asp52, which acts as the Nucleophile. Tyr111 lines the substrate pocket.

Belongs to the tRNA pseudouridine synthase TruA family. As to quaternary structure, homodimer.

The enzyme catalyses uridine(38/39/40) in tRNA = pseudouridine(38/39/40) in tRNA. Formation of pseudouridine at positions 38, 39 and 40 in the anticodon stem and loop of transfer RNAs. The polypeptide is tRNA pseudouridine synthase A (Rhodopseudomonas palustris (strain HaA2)).